Consider the following 375-residue polypeptide: Quinolinate synthase (375 aa).

H47 and S64 together coordinate iminosuccinate. Residue C110 coordinates [4Fe-4S] cluster. Residues Y144–N146 and S165 contribute to the iminosuccinate site. Residue C235 participates in [4Fe-4S] cluster binding. Residues H261 to E263 and T278 contribute to the iminosuccinate site. A [4Fe-4S] cluster-binding site is contributed by C325.

Belongs to the quinolinate synthase family. Type 3 subfamily. [4Fe-4S] cluster serves as cofactor.

It localises to the cytoplasm. It catalyses the reaction iminosuccinate + dihydroxyacetone phosphate = quinolinate + phosphate + 2 H2O + H(+). It functions in the pathway cofactor biosynthesis; NAD(+) biosynthesis; quinolinate from iminoaspartate: step 1/1. Catalyzes the condensation of iminoaspartate with dihydroxyacetone phosphate to form quinolinate. The chain is Quinolinate synthase from Herpetosiphon aurantiacus (strain ATCC 23779 / DSM 785 / 114-95).